Reading from the N-terminus, the 426-residue chain is Riboflavin biosynthesis protein PYRD, chloroplastic (426 aa).

A chloroplast-targeting transit peptide spans 1–61 (MQISCLPISI…SQTGFSNPVL (61 aa)). In terms of domain architecture, CMP/dCMP-type deaminase spans 72 to 194 (VDDSFYMRKC…RLKDAGIDVT (123 aa)). Residue His121 coordinates Zn(2+). Residue Glu123 is the Proton donor of the active site. The Zn(2+) site is built by Cys146 and Cys155.

The cofactor is Zn(2+).

The protein resides in the plastid. The protein localises to the chloroplast. It catalyses the reaction 2,5-diamino-6-hydroxy-4-(5-phosphoribosylamino)-pyrimidine + H2O + H(+) = 5-amino-6-(5-phospho-D-ribosylamino)uracil + NH4(+). It functions in the pathway cofactor biosynthesis; riboflavin biosynthesis; 5-amino-6-(D-ribitylamino)uracil from GTP: step 2/4. Its function is as follows. Monofunctional pyrimidine deaminase involved in the riboflavin biosynthesis pathway. Also has a reductase domain that lacks catalytically essential substrate-binding residues. The sequence is that of Riboflavin biosynthesis protein PYRD, chloroplastic (PYRD) from Arabidopsis thaliana (Mouse-ear cress).